The following is a 499-amino-acid chain: Probable alkaline/neutral invertase F (499 aa).

A Phosphoserine modification is found at serine 11. Threonine 20 carries the phosphothreonine modification. A Phosphoserine modification is found at serine 497.

Belongs to the glycosyl hydrolase 100 family.

The catalysed reaction is Hydrolysis of terminal non-reducing beta-D-fructofuranoside residues in beta-D-fructofuranosides.. Functionally, invertase that cleaves sucrose into glucose and fructose. This chain is Probable alkaline/neutral invertase F, found in Arabidopsis thaliana (Mouse-ear cress).